The following is a 329-amino-acid chain: Thiamine thiazole synthase (329 aa).

Substrate-binding positions include Cys86, 107-108 (EA), Gly115, and Val180. Cys218 bears the 2,3-didehydroalanine (Cys) mark. Residues Asp220, His235, Met287, and 297-299 (RMG) each bind substrate.

Belongs to the THI4 family. In terms of assembly, homooctamer. It depends on Fe cation as a cofactor. During the catalytic reaction, a sulfide is transferred from Cys-218 to a reaction intermediate, generating a dehydroalanine residue.

It localises to the cytoplasm. Its subcellular location is the nucleus. The catalysed reaction is [ADP-thiazole synthase]-L-cysteine + glycine + NAD(+) = [ADP-thiazole synthase]-dehydroalanine + ADP-5-ethyl-4-methylthiazole-2-carboxylate + nicotinamide + 3 H2O + 2 H(+). Involved in biosynthesis of the thiamine precursor thiazole. Catalyzes the conversion of NAD and glycine to adenosine diphosphate 5-(2-hydroxyethyl)-4-methylthiazole-2-carboxylic acid (ADT), an adenylated thiazole intermediate. The reaction includes an iron-dependent sulfide transfer from a conserved cysteine residue of the protein to a thiazole intermediate. The enzyme can only undergo a single turnover, which suggests it is a suicide enzyme. May have additional roles in adaptation to various stress conditions and in DNA damage tolerance. This Phaeosphaeria nodorum (strain SN15 / ATCC MYA-4574 / FGSC 10173) (Glume blotch fungus) protein is Thiamine thiazole synthase.